Here is a 914-residue protein sequence, read N- to C-terminus: MGKSEADEDAQFLPMNRPRSSSAASQTSSDSGLSVESALIRNSTYGKTPDEAYNPAGDPRYRDIEDGEAESDQPFLPSRKGSGARARRVFWGLLLLCLAGWVLAFVLFLIQGRSGYSATSEELQQHEADSSAGVTSDGKPVTLKQVLSGDWLPRSHGIAWIAGPDGEDGLLVEAGEDGGEGFLRVKDIRARHGDDAGTLKSRVLMKKSTFYAGQRSILTRLTWPSPDLKKVLVLSDYEKNWRHSYTGLYWIFDVDSQTAEPLDPDVPEGRVQLASWSPNSDAVVFVRDNNMFLRKLSSDKVVPITKDGGKDLFYGVPDWVYEEEVLSGNSATWWSNDAKYVAFLRTNESTVPEYPVQYFLSRPSGKKPLPGLEDYPDVRQIKYPKAGAPNPVVNLQFYNVEKNEVFSVEVPDDFADDDRIIIEVLWAAESNVLVRATNRESDVLKIFLIDTESRTGKMVRLEDIVGLDGGWVEPSQSTRFIPADPAAGRPNDGYIDTVIHDGYDHLAYFTPLDNPEPIMLTTGEWEVVEAPTAVDLRRGLVYFVATKEAPTQRHVYQVQLDGSNLKPLTDTSKPGYYHVSFSDGTAYALLSYQGPSIPWQAIINTEGDDVVFEETIEENPELARMVETYAIPSKVFSNITIDGFTLQMVERRPPHFNPHKKYPVLFFLYGGPGSQTVDRKFTIDFQSYVASNLGYIVVTLDGRGTGFIGREARCIIRGNLGYYEAHDQITAAKMFAEKSYVDESRMAIWGWSYGGFMTLKTLEQDAGQTFQYGMAVAPVTDWRFYDSIYTERYMHTPQHNPSGYDNSSITDMAALEENVRFLVMHGASDDNVHLQNTLTLIDKLDLSNVQNYDVHFYPDSDHSIFFHNAHYMVYERLSNWLVNAFNGEWHRIAAPVPDNSMWQRFKRALPVFVH.

The segment covering 1–10 (MGKSEADEDA) has biased composition (acidic residues). Positions 1–81 (MGKSEADEDA…DQPFLPSRKG (81 aa)) are disordered. The Cytoplasmic segment spans residues 1-89 (MGKSEADEDA…KGSGARARRV (89 aa)). Residues 20–34 (SSSAASQTSSDSGLS) show a composition bias toward low complexity. The chain crosses the membrane as a helical; Signal-anchor for type II membrane protein span at residues 90 to 110 (FWGLLLLCLAGWVLAFVLFLI). At 111–914 (QGRSGYSATS…FKRALPVFVH (804 aa)) the chain is on the vacuolar side. N347 and N638 each carry an N-linked (GlcNAc...) asparagine glycan. S752 acts as the Charge relay system in catalysis. N806 is a glycosylation site (N-linked (GlcNAc...) asparagine). Catalysis depends on charge relay system residues D829 and H862.

Belongs to the peptidase S9B family.

The protein resides in the vacuole membrane. The enzyme catalyses Release of an N-terminal dipeptide, Xaa-Yaa-|-Zaa-, from a polypeptide, preferentially when Yaa is Pro, provided Zaa is neither Pro nor hydroxyproline.. Functionally, type IV dipeptidyl-peptidase which removes N-terminal dipeptides sequentially from polypeptides having unsubstituted N-termini provided that the penultimate residue is proline. This chain is Probable dipeptidyl-aminopeptidase B (dapB), found in Aspergillus terreus (strain NIH 2624 / FGSC A1156).